The following is a 778-amino-acid chain: DISP complex protein LRCH3 (778 aa).

10 LRR repeats span residues 56-79 (AAVT…AANH), 81-104 (LTDT…ACHF), 105-127 (VSLE…VLNL), 128-150 (QALT…LCNL), 152-172 (LKVL…IGHL), 173-195 (RHLT…IGNL), 197-218 (ALRD…LAEV), 220-239 (LIRL…CYRN), 240-264 (LRHL…CIKG), and 266-290 (IHIF…ERRP). A mediates interaction with DOCK7 region spans residues 56–290 (AAVTGVLSLS…PDLPDYERRP (235 aa)). Phosphoserine is present on residues serine 324, serine 415, and serine 419. Residues 382–642 (TTEEEENDVK…PATDPTDAIT (261 aa)) are mediates direct interaction with MYO6. Residues 511 to 536 (QKASHNPQRQQPPGNGECSFPSRRSQ) form a disordered region. The span at 514–523 (SHNPQRQQPP) shows a compositional bias: polar residues. A phosphoserine mark is found at serine 608 and serine 625. Residues 645-758 (REEELKLIDQ…VTVQALLELA (114 aa)) form the Calponin-homology (CH) domain. Residues 758–778 (APPKQPPPQQPQQQQPQLSAV) are disordered. Positions 768-778 (PQQQQPQLSAV) are enriched in low complexity.

Component of the DOCK7-induced septin displacement/DISP complex, at least composed of DOCK7, LRCH3 and MYO6.

It localises to the cytoplasm. Its function is as follows. As part of the DISP complex, may regulate the association of septins with actin and thereby regulate the actin cytoskeleton. This chain is DISP complex protein LRCH3, found in Mus musculus (Mouse).